Here is a 903-residue protein sequence, read N- to C-terminus: Alanine--tRNA ligase (903 aa).

4 residues coordinate Zn(2+): histidine 581, histidine 585, cysteine 693, and histidine 697.

It belongs to the class-II aminoacyl-tRNA synthetase family. It depends on Zn(2+) as a cofactor.

The protein localises to the cytoplasm. The enzyme catalyses tRNA(Ala) + L-alanine + ATP = L-alanyl-tRNA(Ala) + AMP + diphosphate. In terms of biological role, catalyzes the attachment of alanine to tRNA(Ala) in a two-step reaction: alanine is first activated by ATP to form Ala-AMP and then transferred to the acceptor end of tRNA(Ala). Also edits incorrectly charged Ser-tRNA(Ala) and Gly-tRNA(Ala) via its editing domain. The polypeptide is Alanine--tRNA ligase (Psychrobacter sp. (strain PRwf-1)).